A 192-amino-acid polypeptide reads, in one-letter code: Iodate reductase subunit IdrB (192 aa).

A signal peptide (tat-type signal) is located at residues 1 to 52 (MSENIIPVRAVPAHDHEHDGERACMSRRRFLLFGGTSVALLSIASLPGVAQV). Residues 102-173 (GADKDIVAFN…LEVQGDDIYA (72 aa)) enclose the Rieske domain. The [2Fe-2S] cluster site is built by Cys114, His116, Cys135, and His138.

This sequence belongs to the AOX family. As to quaternary structure, the iodate reductase (Idr) complex is composed of a molybdopterin-dependent iodate reductase (IdrA and IdrB subunits) and two associated peroxidases (IdrP1 and IdrP2). It depends on [2Fe-2S] cluster as a cofactor. Post-translationally, predicted to be exported by the Tat system. The position of the signal peptide cleavage has not been experimentally proven.

Its subcellular location is the periplasm. Functionally, involved in iodate respiration. Probably catalyzes the reduction of iodate (IO(3)(-)) to hypoiodous acid (HIO) and H(2)O(2), using a reduced cytochrome c as the electron donor. In Pseudomonas sp. (strain SCT), this protein is Iodate reductase subunit IdrB.